We begin with the raw amino-acid sequence, 311 residues long: Protease HtpX homolog 1 (311 aa).

2 helical membrane passes run Ile-12 to Phe-32 and Phe-35 to Ser-55. His-137 serves as a coordination point for Zn(2+). The active site involves Glu-138. His-141 provides a ligand contact to Zn(2+). Transmembrane regions (helical) follow at residues Ile-159–Val-179 and Ile-184–Leu-204. Glu-216 contacts Zn(2+).

This sequence belongs to the peptidase M48B family. It depends on Zn(2+) as a cofactor.

Its subcellular location is the cell membrane. In Sulfurisphaera tokodaii (strain DSM 16993 / JCM 10545 / NBRC 100140 / 7) (Sulfolobus tokodaii), this protein is Protease HtpX homolog 1.